Here is a 186-residue protein sequence, read N- to C-terminus: Peptidyl-tRNA hydrolase (186 aa).

Tyr-14 is a binding site for tRNA. The active-site Proton acceptor is the His-19. Tyr-64, Asn-66, and Asn-112 together coordinate tRNA.

This sequence belongs to the PTH family. In terms of assembly, monomer.

It localises to the cytoplasm. It carries out the reaction an N-acyl-L-alpha-aminoacyl-tRNA + H2O = an N-acyl-L-amino acid + a tRNA + H(+). Its function is as follows. Hydrolyzes ribosome-free peptidyl-tRNAs (with 1 or more amino acids incorporated), which drop off the ribosome during protein synthesis, or as a result of ribosome stalling. In terms of biological role, catalyzes the release of premature peptidyl moieties from peptidyl-tRNA molecules trapped in stalled 50S ribosomal subunits, and thus maintains levels of free tRNAs and 50S ribosomes. The protein is Peptidyl-tRNA hydrolase of Bacillus cereus (strain ATCC 14579 / DSM 31 / CCUG 7414 / JCM 2152 / NBRC 15305 / NCIMB 9373 / NCTC 2599 / NRRL B-3711).